A 103-amino-acid polypeptide reads, in one-letter code: Large ribosomal subunit protein bL21 (103 aa).

This sequence belongs to the bacterial ribosomal protein bL21 family. In terms of assembly, part of the 50S ribosomal subunit. Contacts protein L20.

This protein binds to 23S rRNA in the presence of protein L20. The protein is Large ribosomal subunit protein bL21 of Alkaliphilus oremlandii (strain OhILAs) (Clostridium oremlandii (strain OhILAs)).